Reading from the N-terminus, the 266-residue chain is Aspartate/glutamate leucyltransferase (266 aa).

Belongs to the R-transferase family. Bpt subfamily.

It is found in the cytoplasm. The catalysed reaction is N-terminal L-glutamyl-[protein] + L-leucyl-tRNA(Leu) = N-terminal L-leucyl-L-glutamyl-[protein] + tRNA(Leu) + H(+). The enzyme catalyses N-terminal L-aspartyl-[protein] + L-leucyl-tRNA(Leu) = N-terminal L-leucyl-L-aspartyl-[protein] + tRNA(Leu) + H(+). Its function is as follows. Functions in the N-end rule pathway of protein degradation where it conjugates Leu from its aminoacyl-tRNA to the N-termini of proteins containing an N-terminal aspartate or glutamate. The polypeptide is Aspartate/glutamate leucyltransferase (Rhizorhabdus wittichii (strain DSM 6014 / CCUG 31198 / JCM 15750 / NBRC 105917 / EY 4224 / RW1) (Sphingomonas wittichii)).